A 444-amino-acid chain; its full sequence is Protein kinase C and casein kinase substrate in neurons protein 1 (444 aa).

A phosphoserine mark is found at Ser2 and Ser79. An F-BAR domain is found at 13–283 (EETTDSFWEV…AIRGADAQED (271 aa)). A coiled-coil region spans residues 26 to 275 (KRTVKRIDDG…HVYRELEQAI (250 aa)). Disordered regions lie at residues 175 to 194 (MNSK…LQDK) and 309 to 386 (LPHT…DDSK). Residue Thr184 is modified to Phosphothreonine. Over residues 314-324 (TKKEKQPKKAE) the composition is skewed to basic and acidic residues. Positions 329–351 (TNATGAVESTSQAGDRGSVSSYD) are enriched in polar residues. Phosphoserine occurs at positions 346, 348, 349, 361, and 365. Positions 385–444 (SKGVRVRALYDYDGQEQDELSFKAGDELTKLGEEDEQGWCRGRLDSGQLGLYPANYVEAI) constitute an SH3 domain. The residue at position 394 (Tyr394) is a Phosphotyrosine. Phosphoserine occurs at positions 405 and 430.

The protein belongs to the PACSIN family. In terms of assembly, may form heterooligomers with other PACSINs. Interacts with MAPT. Interacts with TRPV4. Interacts (via SH3 domain) with SYNJ1 and WASL. Interacts with DNM2 and DNM3. Interacts with both COBL and DBNL. Identified in a complex composed of COBL, PACSIN1 and WASL. Interacts with EHD1 and EHD3. Homodimer. Interacts (via SH3 domain) with DNM1; the interaction is reduced by DNM1 phosphorylation. In terms of processing, phosphorylated by casein kinase 2 (CK2) and protein kinase C (PKC). Highly expressed in brain and, at much lower levels, in heart and pancreas.

The protein localises to the cytoplasm. It is found in the cell projection. Its subcellular location is the synapse. The protein resides in the synaptosome. It localises to the ruffle membrane. The protein localises to the membrane. It is found in the cytoplasmic vesicle membrane. Its subcellular location is the cytosol. The protein resides in the cell membrane. Its function is as follows. Plays a role in the reorganization of the microtubule cytoskeleton via its interaction with MAPT; this decreases microtubule stability and inhibits MAPT-induced microtubule polymerization. Plays a role in cellular transport processes by recruiting DNM1, DNM2 and DNM3 to membranes. Plays a role in the reorganization of the actin cytoskeleton and in neuron morphogenesis via its interaction with COBL and WASL, and by recruiting COBL to the cell cortex. Plays a role in the regulation of neurite formation, neurite branching and the regulation of neurite length. Required for normal synaptic vesicle endocytosis; this process retrieves previously released neurotransmitters to accommodate multiple cycles of neurotransmission. Required for normal excitatory and inhibitory synaptic transmission. Binds to membranes via its F-BAR domain and mediates membrane tubulation. In Homo sapiens (Human), this protein is Protein kinase C and casein kinase substrate in neurons protein 1 (PACSIN1).